The primary structure comprises 123 residues: Small ribosomal subunit protein uS12 (123 aa).

A disordered region spans residues 1–30 (MPTIQQLIRKPRQPKVQRSKSQHLQSCPQK). Residues 9 to 21 (RKPRQPKVQRSKS) show a composition bias toward basic residues. Position 89 is a 3-methylthioaspartic acid (Asp89).

Belongs to the universal ribosomal protein uS12 family. Part of the 30S ribosomal subunit. Contacts proteins S8 and S17. May interact with IF1 in the 30S initiation complex.

Functionally, with S4 and S5 plays an important role in translational accuracy. Interacts with and stabilizes bases of the 16S rRNA that are involved in tRNA selection in the A site and with the mRNA backbone. Located at the interface of the 30S and 50S subunits, it traverses the body of the 30S subunit contacting proteins on the other side and probably holding the rRNA structure together. The combined cluster of proteins S8, S12 and S17 appears to hold together the shoulder and platform of the 30S subunit. The chain is Small ribosomal subunit protein uS12 from Paracoccus denitrificans (strain Pd 1222).